The chain runs to 543 residues: Formin-binding protein 1-like (543 aa).

The 263-residue stretch at 1–263 folds into the F-BAR domain; it reads MSWGTELWDQ…AAKSVDERRD (263 aa). Coiled-coil stretches lie at residues 66–258 and 334–426; these read FTSC…AKSV and LEDF…QRSE. The 78-residue stretch at 339 to 416 folds into the REM-1 domain; sequence HLPPEQRRKR…IHKNEGWLSE (78 aa). A disordered region spans residues 424 to 467; sequence RSERRHSAEANHLVAQGRESPEGSYTEDANQEGRVQPQHHAHPE. In terms of domain architecture, SH3 spans 479–540; it reads PAIGHCKSLY…PTSYIEITLE (62 aa).

The protein belongs to the FNBP1 family. As to quaternary structure, homodimerizes, the dimers can polymerize end-to-end to form filamentous structures. Interacts with GTP-bound cdc42 and wasl/n-wasp.

It is found in the cytoplasm. It localises to the cytoskeleton. Its subcellular location is the cell cortex. The protein localises to the cytoplasmic vesicle. The protein resides in the cell membrane. Its function is as follows. Required to coordinate membrane tubulation with reorganization of the actin cytoskeleton during endocytosis. Essential for autophagy of intracellular bacterial pathogens. Promotes cdc42-induced actin polymerization by activating the wasl-waspip complex, the predominant form of wasl/n-wasp in cells. This chain is Formin-binding protein 1-like (fnbp1l), found in Xenopus laevis (African clawed frog).